We begin with the raw amino-acid sequence, 98 residues long: Large ribosomal subunit protein uL23 (98 aa).

It belongs to the universal ribosomal protein uL23 family. Part of the 50S ribosomal subunit. Contacts protein L29, and trigger factor when it is bound to the ribosome.

In terms of biological role, one of the early assembly proteins it binds 23S rRNA. One of the proteins that surrounds the polypeptide exit tunnel on the outside of the ribosome. Forms the main docking site for trigger factor binding to the ribosome. This Rickettsia africae (strain ESF-5) protein is Large ribosomal subunit protein uL23.